Consider the following 774-residue polypeptide: Polymerase basic protein 2 (774 aa).

This sequence belongs to the influenza viruses PB2 family. As to quaternary structure, influenza RNA polymerase is composed of three subunits: PB1, PB2 and PA. Interacts (via N-terminus) with PB1 (via C-terminus). Interacts with nucleoprotein NP (via N-terminus). Interacts with host ANP32A (via C-terminus); this interaction promotes viral RNA synthesis.

The protein localises to the virion. The protein resides in the host nucleus. Functionally, plays an essential role in transcription initiation and cap-stealing mechanism, in which cellular capped pre-mRNAs are used to generate primers for viral transcription. Recognizes and binds a wide range of cap structures of target pre-RNAs which are subsequently cleaved after 10-13 nucleotides by the viral protein PA. Plays a role in the initiation of the viral genome replication and modulates the activity of the ribonucleoprotein (RNP) complex. This chain is Polymerase basic protein 2, found in Influenza C virus (strain C/Johannesburg/1/1966).